Consider the following 506-residue polypeptide: UBX domain-containing protein 4 (506 aa).

The tract at residues Met-1–Glu-199 is interaction with UBQLN1. Residues Met-1–Thr-411 are Cytoplasmic-facing. Composition is skewed to polar residues over residues Ser-114–Ala-136 and Ser-177–Arg-189. The tract at residues Ser-114–Asp-193 is disordered. The region spanning Asp-313–Leu-391 is the UBX domain. The stretch at Leu-412–Phe-432 is an intramembrane region. The Cytoplasmic portion of the chain corresponds to Ser-433–Met-506. The segment at Pro-437–Met-506 is disordered. A compositionally biased stretch (low complexity) spans Ala-444–Ser-456. A compositionally biased stretch (basic and acidic residues) spans Lys-457–Asp-489. Thr-487 carries the phosphothreonine modification. Residues Asn-496–Met-506 are compositionally biased toward polar residues.

As to quaternary structure, directly interacts with VCP. Interacts with UBQLN1. Forms a complex with VCP and UBQLN1.

The protein resides in the endoplasmic reticulum membrane. The protein localises to the nucleus envelope. In terms of biological role, involved in endoplasmic reticulum-associated protein degradation (ERAD). Acts as a platform to recruit both UBQLN1 and VCP to the ER during ERAD. The chain is UBX domain-containing protein 4 (Ubxn4) from Rattus norvegicus (Rat).